Here is a 186-residue protein sequence, read N- to C-terminus: Protein GrpE (186 aa).

Over residues 1 to 17 the composition is skewed to basic and acidic residues; that stretch reads MKDEHNQEHDLSQKELE. A disordered region spans residues 1–32; the sequence is MKDEHNQEHDLSQKELESCENSCTCEGKKQEA.

This sequence belongs to the GrpE family. Homodimer.

It is found in the cytoplasm. Its function is as follows. Participates actively in the response to hyperosmotic and heat shock by preventing the aggregation of stress-denatured proteins, in association with DnaK and GrpE. It is the nucleotide exchange factor for DnaK and may function as a thermosensor. Unfolded proteins bind initially to DnaJ; upon interaction with the DnaJ-bound protein, DnaK hydrolyzes its bound ATP, resulting in the formation of a stable complex. GrpE releases ADP from DnaK; ATP binding to DnaK triggers the release of the substrate protein, thus completing the reaction cycle. Several rounds of ATP-dependent interactions between DnaJ, DnaK and GrpE are required for fully efficient folding. The sequence is that of Protein GrpE from Helicobacter acinonychis (strain Sheeba).